We begin with the raw amino-acid sequence, 371 residues long: 2-oxoadipate dioxygenase/decarboxylase, chloroplastic (371 aa).

The N-terminal 50 residues, 1–50 (MISLHSSAIKASLYGSFPSSLRSTLSVSFSAGSLIRLPSVGKRNLSVVVS), are a transit peptide targeting the chloroplast. Residues H113 and R117 each coordinate 2-oxoadipate. H113 serves as a coordination point for Fe(2+). H250 provides a ligand contact to Fe(2+). Residues Q296 and Y320 each coordinate 2-oxoadipate. E322 serves as a coordination point for Fe(2+).

Belongs to the 2-oxoadipate dioxygenase/decarboxylase family. Fe(2+) serves as cofactor.

It localises to the plastid. The protein resides in the chloroplast. The enzyme catalyses 2-oxoadipate + O2 = (R)-2-hydroxyglutarate + CO2. The protein operates within amino-acid degradation. Its function is as follows. Catalyzes the decarboxylation and hydroxylation of 2-oxoadipate (2OA) to form D-2-hydroxyglutarate (D-2-HGA). Is involved in a D-lysine catabolic pathway. The chain is 2-oxoadipate dioxygenase/decarboxylase, chloroplastic from Arabidopsis thaliana (Mouse-ear cress).